We begin with the raw amino-acid sequence, 194 residues long: FMN-dependent NADH:quinone oxidoreductase (194 aa).

Residues Ser-9, 15-17 (SIS), and 85-88 (MYNF) contribute to the FMN site.

This sequence belongs to the azoreductase type 1 family. As to quaternary structure, homodimer. FMN is required as a cofactor.

It carries out the reaction 2 a quinone + NADH + H(+) = 2 a 1,4-benzosemiquinone + NAD(+). It catalyses the reaction N,N-dimethyl-1,4-phenylenediamine + anthranilate + 2 NAD(+) = 2-(4-dimethylaminophenyl)diazenylbenzoate + 2 NADH + 2 H(+). In terms of biological role, quinone reductase that provides resistance to thiol-specific stress caused by electrophilic quinones. Functionally, also exhibits azoreductase activity. Catalyzes the reductive cleavage of the azo bond in aromatic azo compounds to the corresponding amines. The polypeptide is FMN-dependent NADH:quinone oxidoreductase (Xanthomonas oryzae pv. oryzae (strain KACC10331 / KXO85)).